A 121-amino-acid chain; its full sequence is Ribonuclease P protein component (121 aa).

It belongs to the RnpA family. In terms of assembly, consists of a catalytic RNA component (M1 or rnpB) and a protein subunit.

It catalyses the reaction Endonucleolytic cleavage of RNA, removing 5'-extranucleotides from tRNA precursor.. In terms of biological role, RNaseP catalyzes the removal of the 5'-leader sequence from pre-tRNA to produce the mature 5'-terminus. It can also cleave other RNA substrates such as 4.5S RNA. The protein component plays an auxiliary but essential role in vivo by binding to the 5'-leader sequence and broadening the substrate specificity of the ribozyme. This Oceanobacillus iheyensis (strain DSM 14371 / CIP 107618 / JCM 11309 / KCTC 3954 / HTE831) protein is Ribonuclease P protein component.